A 143-amino-acid chain; its full sequence is Transcriptional regulator MraZ (143 aa).

2 SpoVT-AbrB domains span residues 5–47 (EFRH…PMKE) and 76–119 (ATEC…DEAR).

It belongs to the MraZ family. Forms oligomers.

The protein resides in the cytoplasm. It localises to the nucleoid. This Enterococcus hirae protein is Transcriptional regulator MraZ.